Reading from the N-terminus, the 362-residue chain is 5'-tyrosyl-DNA phosphodiesterase (362 aa).

A compositionally biased stretch (acidic residues) spans M1–E10. The segment at M1–M43 is disordered. Over residues I11 to Q20 the composition is skewed to basic and acidic residues. Positions E21–P33 are enriched in acidic residues. The interaction with 5' end of substrate DNA stretch occupies residues N126–L130. Residues D128 and E158 each coordinate Mg(2+). The interval H232–R237 is interaction with 5' end of substrate DNA. The active-site Proton donor/acceptor is D271. The segment at N273–R275 is interaction with 5' end of substrate DNA.

The protein belongs to the CCR4/nocturin family. TTRAP/TDP2 subfamily. In terms of assembly, interacts with mxl-1; the interaction promotes axon regeneration after injury. Interacts with ets-4; the interaction is required for the sumoylation of ets-4. Mg(2+) is required as a cofactor. It depends on Mn(2+) as a cofactor.

It localises to the nucleus. It is found in the PML body. Its function is as follows. DNA repair enzyme that can remove a variety of covalent adducts from DNA through hydrolysis of a 5'-phosphodiester bond, giving rise to DNA with a free 5' phosphate. Catalyzes the hydrolysis of dead-end complexes between DNA and the topoisomerase 2 (top2) active site tyrosine residue. Hydrolyzes 5'-phosphoglycolates on protruding 5' ends on DNA double-strand breaks (DSBs) due to DNA damage by radiation and free radicals. Inhibits axon regeneration after neuronal injury by promoting the sumoylation of ets-4, thereby inhibiting the phosphorylation of ets-4 required for probable interaction with cebp-1 and activation of svh-2 expression. This is 5'-tyrosyl-DNA phosphodiesterase from Caenorhabditis elegans.